A 112-amino-acid polypeptide reads, in one-letter code: ATP synthase subunit c (112 aa).

2 helical membrane-spanning segments follow: residues 36–56 (FSVL…AIGM) and 81–101 (MFIA…IALI).

It belongs to the ATPase C chain family. In terms of assembly, F-type ATPases have 2 components, F(1) - the catalytic core - and F(0) - the membrane proton channel. F(1) has five subunits: alpha(3), beta(3), gamma(1), delta(1), epsilon(1). F(0) has three main subunits: a(1), b(2) and c(10-14). The alpha and beta chains form an alternating ring which encloses part of the gamma chain. F(1) is attached to F(0) by a central stalk formed by the gamma and epsilon chains, while a peripheral stalk is formed by the delta and b chains.

It localises to the cell inner membrane. F(1)F(0) ATP synthase produces ATP from ADP in the presence of a proton or sodium gradient. F-type ATPases consist of two structural domains, F(1) containing the extramembraneous catalytic core and F(0) containing the membrane proton channel, linked together by a central stalk and a peripheral stalk. During catalysis, ATP synthesis in the catalytic domain of F(1) is coupled via a rotary mechanism of the central stalk subunits to proton translocation. Its function is as follows. Key component of the F(0) channel; it plays a direct role in translocation across the membrane. A homomeric c-ring of between 10-14 subunits forms the central stalk rotor element with the F(1) delta and epsilon subunits. The sequence is that of ATP synthase subunit c from Campylobacter jejuni subsp. jejuni serotype O:6 (strain 81116 / NCTC 11828).